The chain runs to 261 residues: tRNA 5-carboxymethoxyuridine methyltransferase (261 aa).

S-adenosyl-L-methionine-binding positions include Arg26, 52–53 (GG), Asp73, 102–103 (AQ), and His119.

Belongs to the class I-like SAM-binding methyltransferase superfamily. CmoM family. As to quaternary structure, homodimer.

The enzyme catalyses 5-carboxymethoxyuridine(34) in tRNA + S-adenosyl-L-methionine = 5-methoxycarbonylmethoxyuridine(34) in tRNA + S-adenosyl-L-homocysteine. In terms of biological role, catalyzes the methylation of 5-carboxymethoxyuridine (cmo5U) to form 5-methoxycarbonylmethoxyuridine (mcmo5U) at position 34 in tRNAs. The polypeptide is tRNA 5-carboxymethoxyuridine methyltransferase (Escherichia coli O157:H7).